A 1578-amino-acid chain; its full sequence is Pentafunctional AROM polypeptide (1578 aa).

Positions M1–N384 are 3-dehydroquinate synthase. Residues D44 to N46, E81 to K84, G114 to V116, and D119 contribute to the NAD(+) site. 7-phospho-2-dehydro-3-deoxy-D-arabino-heptonate is bound at residue R130. T139–T140 contributes to the NAD(+) binding site. Residues D146 and K152 each contribute to the 7-phospho-2-dehydro-3-deoxy-D-arabino-heptonate site. K161 lines the NAD(+) pocket. Residue N162 participates in 7-phospho-2-dehydro-3-deoxy-D-arabino-heptonate binding. Residues F179–T182 and N190 each bind NAD(+). E194 lines the Zn(2+) pocket. Residues E194 to K197 and K250 each bind 7-phospho-2-dehydro-3-deoxy-D-arabino-heptonate. E260 acts as the Proton acceptor; for 3-dehydroquinate synthase activity in catalysis. 7-phospho-2-dehydro-3-deoxy-D-arabino-heptonate is bound by residues R264–N268 and H271. H271 contacts Zn(2+). The active-site Proton acceptor; for 3-dehydroquinate synthase activity is H275. Residues H287 and K356 each contribute to the 7-phospho-2-dehydro-3-deoxy-D-arabino-heptonate site. Residue H287 participates in Zn(2+) binding. An EPSP synthase region spans residues V397 to V842. Residue C824 is the For EPSP synthase activity of the active site. The segment at S864–S1055 is shikimate kinase. G871–T878 contributes to the ATP binding site. Residues L1056 to D1276 form a 3-dehydroquinase region. H1179 functions as the Proton acceptor; for 3-dehydroquinate dehydratase activity in the catalytic mechanism. Catalysis depends on K1207, which acts as the Schiff-base intermediate with substrate; for 3-dehydroquinate dehydratase activity. The shikimate dehydrogenase stretch occupies residues K1289–G1578.

In the N-terminal section; belongs to the sugar phosphate cyclases superfamily. Dehydroquinate synthase family. The protein in the 2nd section; belongs to the EPSP synthase family. It in the 3rd section; belongs to the shikimate kinase family. This sequence in the 4th section; belongs to the type-I 3-dehydroquinase family. In the C-terminal section; belongs to the shikimate dehydrogenase family. As to quaternary structure, homodimer. Zn(2+) is required as a cofactor.

The protein resides in the cytoplasm. It catalyses the reaction 7-phospho-2-dehydro-3-deoxy-D-arabino-heptonate = 3-dehydroquinate + phosphate. The catalysed reaction is 3-dehydroquinate = 3-dehydroshikimate + H2O. It carries out the reaction shikimate + NADP(+) = 3-dehydroshikimate + NADPH + H(+). The enzyme catalyses shikimate + ATP = 3-phosphoshikimate + ADP + H(+). It catalyses the reaction 3-phosphoshikimate + phosphoenolpyruvate = 5-O-(1-carboxyvinyl)-3-phosphoshikimate + phosphate. Its pathway is metabolic intermediate biosynthesis; chorismate biosynthesis; chorismate from D-erythrose 4-phosphate and phosphoenolpyruvate: step 2/7. It functions in the pathway metabolic intermediate biosynthesis; chorismate biosynthesis; chorismate from D-erythrose 4-phosphate and phosphoenolpyruvate: step 3/7. The protein operates within metabolic intermediate biosynthesis; chorismate biosynthesis; chorismate from D-erythrose 4-phosphate and phosphoenolpyruvate: step 4/7. It participates in metabolic intermediate biosynthesis; chorismate biosynthesis; chorismate from D-erythrose 4-phosphate and phosphoenolpyruvate: step 5/7. Its pathway is metabolic intermediate biosynthesis; chorismate biosynthesis; chorismate from D-erythrose 4-phosphate and phosphoenolpyruvate: step 6/7. Functionally, the AROM polypeptide catalyzes 5 consecutive enzymatic reactions in prechorismate polyaromatic amino acid biosynthesis. This chain is Pentafunctional AROM polypeptide, found in Neosartorya fischeri (strain ATCC 1020 / DSM 3700 / CBS 544.65 / FGSC A1164 / JCM 1740 / NRRL 181 / WB 181) (Aspergillus fischerianus).